Consider the following 469-residue polypeptide: Tubulin gamma chain (469 aa).

Position 142–148 (142–148 (AGGTGSG)) interacts with GTP.

This sequence belongs to the tubulin family.

The protein localises to the cytoplasm. Its subcellular location is the cytoskeleton. It is found in the microtubule organizing center. The protein resides in the spindle pole body. Functionally, tubulin is the major constituent of microtubules. The gamma chain is found at microtubule organizing centers (MTOC) such as the spindle poles or the centrosome, suggesting that it is involved in the minus-end nucleation of microtubule assembly. This chain is Tubulin gamma chain (TUB4), found in Microbotryum violaceum (Anther smut fungus).